Reading from the N-terminus, the 335-residue chain is Cytoskeleton protein RodZ (335 aa).

Over 1–111 the chain is Cytoplasmic; the sequence is MNTEATHDQN…LGKRRKKRDG (111 aa). The HTH cro/C1-type domain occupies 19-71; that stretch reads LRNAREQLGLSQQAVAERLCLKVSTVRDIEEDKAPADLASTFLRGYIRSYARL. The H-T-H motif DNA-binding region spans 30-49; that stretch reads QQAVAERLCLKVSTVRDIEE. A helical; Signal-anchor for type II membrane protein transmembrane segment spans residues 112 to 132; it reads WLMTFTWLVLFVVIGLSGAWW. Topologically, residues 133 to 335 are periplasmic; the sequence is WQDHKAQQEE…TLNAEQSPAQ (203 aa). Polar residues predominate over residues 148 to 164; sequence DQSSAELNNNQSQSVPL. The tract at residues 148 to 244 is disordered; sequence DQSSAELNNN…PLPTDQAGVT (97 aa). 2 stretches are compositionally biased toward low complexity: residues 165–205 and 217–239; these read DTST…DPQQ and DTAA…LPTD.

This sequence belongs to the RodZ family.

The protein localises to the cell inner membrane. In terms of biological role, cytoskeletal protein that is involved in cell-shape control through regulation of the length of the long axis. This Escherichia coli O6:H1 (strain CFT073 / ATCC 700928 / UPEC) protein is Cytoskeleton protein RodZ.